The sequence spans 430 residues: MCDVVLGSQWGDEGKGKLVDLLCDDIDVCARCQGGNNAGHTIVVGDVKYDFHMLPSGLVNPNCLNLVGSGVVVHVPSFFQELENLEKKGLNCRDRLFLSSRAHLVFDFHQRTDKLKEAELSENKKAIGTTGKGIGPTYSTKASRSGIRVHHLVSEDPEAWEEFKTRYHRLVNSRKQRYGEFDYDVEEELARYEKYRELLRPFVVDSIEFMHTALVQNKRILVEGANALMLDIDFGTYPYVTSSSTGIGGVLTGLGIPPKTINNIYGVVKAYTTRVGEGPFPTEQLNEFGEALQTIGAEYGVTTGRKRRCGWLDLVVLKYSTLINGYTSLNITKLDVLDSFKEIQVGVGYKLNGKSLASFPEDLIKLGKVEVEYKTLPGWETDITKIKTYDELPENAKSYLKFIEDYLGVPVQWVGTGPARDSMLEKPISK.

Residues 11–17 and 39–41 contribute to the GTP site; these read GDEGKGK and GHT. Asp12 (proton acceptor) is an active-site residue. 2 residues coordinate Mg(2+): Asp12 and Gly39. IMP-binding positions include 12–15, 37–40, Thr130, Arg144, Asn226, Thr241, and Arg305; these read DEGK and NAGH. Residue His40 is the Proton donor of the active site. Position 301–307 (301–307) interacts with substrate; it reads VTTGRKR. GTP is bound by residues Arg307, 333–335, and 415–417; these read KLD and GTG.

Belongs to the adenylosuccinate synthetase family. In terms of assembly, homodimer. Requires Mg(2+) as cofactor.

It is found in the cytoplasm. The enzyme catalyses IMP + L-aspartate + GTP = N(6)-(1,2-dicarboxyethyl)-AMP + GDP + phosphate + 2 H(+). Its pathway is purine metabolism; AMP biosynthesis via de novo pathway; AMP from IMP: step 1/2. Its function is as follows. Plays an important role in the de novo pathway and in the salvage pathway of purine nucleotide biosynthesis. Catalyzes the first committed step in the biosynthesis of AMP from IMP. This chain is Adenylosuccinate synthetase, found in Scheffersomyces stipitis (strain ATCC 58785 / CBS 6054 / NBRC 10063 / NRRL Y-11545) (Yeast).